The primary structure comprises 96 residues: Large ribosomal subunit protein bL28 (96 aa).

This sequence belongs to the bacterial ribosomal protein bL28 family.

This is Large ribosomal subunit protein bL28 from Methylocella silvestris (strain DSM 15510 / CIP 108128 / LMG 27833 / NCIMB 13906 / BL2).